The chain runs to 600 residues: Glutamine--fructose-6-phosphate aminotransferase [isomerizing] (600 aa).

Cys-2 acts as the Nucleophile; for GATase activity in catalysis. In terms of domain architecture, Glutamine amidotransferase type-2 spans 2-217; sequence CGIVGYIGNE…DEELVIVRRD (216 aa). SIS domains lie at 283-422 and 452-590; these read IRAA…AAGK and IARD…VDKP. Catalysis depends on Lys-595, which acts as the For Fru-6P isomerization activity.

Homodimer.

The protein localises to the cytoplasm. It catalyses the reaction D-fructose 6-phosphate + L-glutamine = D-glucosamine 6-phosphate + L-glutamate. Catalyzes the first step in hexosamine metabolism, converting fructose-6P into glucosamine-6P using glutamine as a nitrogen source. This chain is Glutamine--fructose-6-phosphate aminotransferase [isomerizing], found in Shouchella clausii (strain KSM-K16) (Alkalihalobacillus clausii).